A 145-amino-acid chain; its full sequence is Superoxide dismutase [Mn/Fe] (145 aa).

Residues His10 and His64 each coordinate Fe(3+). Positions 10 and 64 each coordinate Mn(2+). The tract at residues 126-145 is disordered; the sequence is TSTANQDTPISEGKKPILGL.

It belongs to the iron/manganese superoxide dismutase family. Mn(2+) serves as cofactor. The cofactor is Fe(3+).

The enzyme catalyses 2 superoxide + 2 H(+) = H2O2 + O2. Functionally, destroys superoxide anion radicals which are normally produced within the cells and which are toxic to biological systems. Catalyzes the dismutation of superoxide anion radicals into O2 and H2O2 by successive reduction and oxidation of the transition metal ion at the active site. This is Superoxide dismutase [Mn/Fe] (sodA) from Streptococcus mitis.